The chain runs to 344 residues: Dihydroorotase (344 aa).

Zn(2+)-binding residues include His14 and His16. Residues His16–Arg18 and Asn42 contribute to the substrate site. Residues Lys100, His137, and His175 each coordinate Zn(2+). At Lys100 the chain carries N6-carboxylysine. Residue His137 coordinates substrate. Residue Leu220 participates in substrate binding. Asp248 provides a ligand contact to Zn(2+). Residue Asp248 is part of the active site. Substrate is bound by residues His252 and Ala264.

Belongs to the metallo-dependent hydrolases superfamily. DHOase family. Class II DHOase subfamily. In terms of assembly, homodimer. Zn(2+) is required as a cofactor.

The enzyme catalyses (S)-dihydroorotate + H2O = N-carbamoyl-L-aspartate + H(+). The protein operates within pyrimidine metabolism; UMP biosynthesis via de novo pathway; (S)-dihydroorotate from bicarbonate: step 3/3. Functionally, catalyzes the reversible cyclization of carbamoyl aspartate to dihydroorotate. This chain is Dihydroorotase, found in Erythrobacter litoralis (strain HTCC2594).